The following is a 549-amino-acid chain: Cytochrome c oxidase subunit 1 homolog, bacteroid (549 aa).

Helical transmembrane passes span 12–32 (IGES…VIAA), 39–59 (PFAF…FCIV), and 87–107 (FSSF…LIIA). H131 contributes to the heme b binding site. The next 8 helical transmembrane spans lie at 132 to 152 (TSAV…FYVV), 168 to 188 (FVVV…LLGV), 201 to 221 (ADLW…ATII), 228 to 248 (IFVA…LHLG), 279 to 299 (GHNA…YYFI), 312 to 332 (LSII…PHHL), 344 to 364 (LGMT…INGL), and 382 to 402 (MLVV…MMSI). Positions 280, 330, and 331 each coordinate Cu cation. 2 residues coordinate heme b: H418 and H420. 3 helical membrane-spanning segments follow: residues 423-443 (ALGW…PWAW), 458-478 (FWVA…SGIL), and 512-532 (AGGG…WMTV).

Belongs to the heme-copper respiratory oxidase family. The cofactor is Cu(2+). Requires heme b as cofactor.

Its subcellular location is the cell membrane. It carries out the reaction 4 Fe(II)-[cytochrome c] + O2 + 8 H(+)(in) = 4 Fe(III)-[cytochrome c] + 2 H2O + 4 H(+)(out). It functions in the pathway energy metabolism; oxidative phosphorylation. Functionally, cytochrome c oxidase is the component of the respiratory chain that catalyzes the reduction of oxygen to water. Subunits 1-3 form the functional core of the enzyme complex. Co I is the catalytic subunit of the enzyme. Electrons originating in cytochrome c or a quinol are transferred to the bimetallic center formed by a high-spin heme and copper B. The polypeptide is Cytochrome c oxidase subunit 1 homolog, bacteroid (fixN) (Bradyrhizobium diazoefficiens (strain JCM 10833 / BCRC 13528 / IAM 13628 / NBRC 14792 / USDA 110)).